We begin with the raw amino-acid sequence, 40 residues long: Photosystem II reaction center protein J (40 aa).

Residues 10–30 (LWLIGTVAGILVIGLVGIFFY) form a helical membrane-spanning segment.

The protein belongs to the PsbJ family. As to quaternary structure, PSII is composed of 1 copy each of membrane proteins PsbA, PsbB, PsbC, PsbD, PsbE, PsbF, PsbH, PsbI, PsbJ, PsbK, PsbL, PsbM, PsbT, PsbX, PsbY, PsbZ, Psb30/Ycf12, at least 3 peripheral proteins of the oxygen-evolving complex and a large number of cofactors. It forms dimeric complexes.

Its subcellular location is the plastid. The protein localises to the chloroplast thylakoid membrane. One of the components of the core complex of photosystem II (PSII). PSII is a light-driven water:plastoquinone oxidoreductase that uses light energy to abstract electrons from H(2)O, generating O(2) and a proton gradient subsequently used for ATP formation. It consists of a core antenna complex that captures photons, and an electron transfer chain that converts photonic excitation into a charge separation. The protein is Photosystem II reaction center protein J of Marchantia polymorpha (Common liverwort).